We begin with the raw amino-acid sequence, 458 residues long: GTPase Der (458 aa).

2 consecutive EngA-type G domains span residues 9 to 171 (KTIA…DLNQ) and 197 to 368 (IQVG…ECFS). GTP-binding positions include 15–22 (GQPNVGKS), 62–66 (DTGGM), 123–126 (NKID), 203–210 (GRVNVGKS), 250–254 (DTAGI), and 314–317 (NKWD). A KH-like domain is found at 369–453 (KRIPTSLLNS…PLILNAKDKK (85 aa)).

Belongs to the TRAFAC class TrmE-Era-EngA-EngB-Septin-like GTPase superfamily. EngA (Der) GTPase family. Associates with the 50S ribosomal subunit.

GTPase that plays an essential role in the late steps of ribosome biogenesis. The protein is GTPase Der of Helicobacter pylori (strain ATCC 700392 / 26695) (Campylobacter pylori).